A 370-amino-acid polypeptide reads, in one-letter code: DNA replication and repair protein RecF (370 aa).

ATP is bound at residue 30 to 37 (GENAQGKT).

The protein belongs to the RecF family. In terms of assembly, recruited to foci following DNA damage; probably interacts with RecO.

The protein localises to the cytoplasm. It localises to the nucleoid. Functionally, the RecF protein is involved in DNA metabolism; it is required for DNA replication and normal SOS inducibility. RecF binds preferentially to single-stranded, linear DNA. It also seems to bind ATP. Is recruited to repair centers, foci that are the site of double-strand DNA break(s) after RecN and RecO; recruitment may depend on RecO. A positive modulator of RecA. This is DNA replication and repair protein RecF from Bacillus subtilis (strain 168).